A 244-amino-acid chain; its full sequence is Protein TIFY 10b (244 aa).

Positions 97–132 (QEPEKRQLTIFYGGKVLVFNDFPADKAKGLMQLASK) constitute a Tify domain. The tract at residues 174 to 244 (QKPARANASD…AVVKPIERGQ (71 aa)) is disordered. Residues 185 to 210 (PIARKASLHRFLEKRKDRLNAKTPYQ) carry the Jas motif. Residues 187–194 (ARKASLHR) carry the Nuclear localization signal motif. Positions 194-204 (RFLEKRKDRLN) are enriched in basic and acidic residues.

It belongs to the TIFY/JAZ family. Interacts with BHLH148. Interacts with COI1A and COI1B in a coronatine-dependent manner. Coronatine is an analog of jasmonoyl isoleucine (JA-Ile). In terms of processing, ubiquitinated. Targeted for degradation by the SCF(COI1) E3 ubiquitin ligase-proteasome pathway during jasmonate signaling.

The protein localises to the nucleus. Functionally, repressor of jasmonate responses. The chain is Protein TIFY 10b from Oryza sativa subsp. japonica (Rice).